The sequence spans 201 residues: Ubiquinone biosynthesis accessory factor UbiJ (201 aa).

One can recognise an SCP2 domain in the interval 15–112; sequence LNTFLYRSPA…QVVQNFVALA (98 aa).

This sequence belongs to the UbiJ family.

It is found in the cytoplasm. Its pathway is cofactor biosynthesis; ubiquinone biosynthesis. Its function is as follows. Required for ubiquinone (coenzyme Q) biosynthesis under aerobic conditions. Binds hydrophobic ubiquinone biosynthetic intermediates via its SCP2 domain and is essential for the stability of the Ubi complex. May constitute a docking platform where Ubi enzymes assemble and access their SCP2-bound polyprenyl substrates. Required for intracellular proliferation in macrophages. This Salmonella typhimurium (strain LT2 / SGSC1412 / ATCC 700720) protein is Ubiquinone biosynthesis accessory factor UbiJ.